We begin with the raw amino-acid sequence, 344 residues long: tRNA dimethylallyltransferase (344 aa).

43 to 50 (GPTCCGKS) serves as a coordination point for ATP. 45–50 (TCCGKS) contributes to the substrate binding site. The interaction with substrate tRNA stretch occupies residues 68–71 (DSMQ).

This sequence belongs to the IPP transferase family. As to quaternary structure, monomer. Requires Mg(2+) as cofactor.

The catalysed reaction is adenosine(37) in tRNA + dimethylallyl diphosphate = N(6)-dimethylallyladenosine(37) in tRNA + diphosphate. Catalyzes the transfer of a dimethylallyl group onto the adenine at position 37 in tRNAs that read codons beginning with uridine, leading to the formation of N6-(dimethylallyl)adenosine (i(6)A). This Protochlamydia amoebophila (strain UWE25) protein is tRNA dimethylallyltransferase.